The primary structure comprises 460 residues: Benzyl alcohol O-benzoyltransferase (460 aa).

Catalysis depends on proton acceptor residues His167 and Asp382.

Belongs to the plant acyltransferase family.

The catalysed reaction is benzyl alcohol + benzoyl-CoA = benzyl benzoate + CoA. Its function is as follows. Probably involved in the formation of volatile ester benzylbenzoate. The sequence is that of Benzyl alcohol O-benzoyltransferase (HSR201) from Nicotiana tabacum (Common tobacco).